The sequence spans 103 residues: Large ribosomal subunit protein uL24 (103 aa).

The protein belongs to the universal ribosomal protein uL24 family. In terms of assembly, part of the 50S ribosomal subunit.

Functionally, one of two assembly initiator proteins, it binds directly to the 5'-end of the 23S rRNA, where it nucleates assembly of the 50S subunit. One of the proteins that surrounds the polypeptide exit tunnel on the outside of the subunit. This Enterococcus faecalis (strain ATCC 700802 / V583) protein is Large ribosomal subunit protein uL24.